The chain runs to 114 residues: uncharacterized protein (114 aa).

This is an uncharacterized protein from Schizosaccharomyces pombe (strain 972 / ATCC 24843) (Fission yeast).